A 439-amino-acid chain; its full sequence is Taxadien-5-alpha-ol O-acetyltransferase (439 aa).

Active-site proton acceptor residues include histidine 164 and aspartate 373.

This sequence belongs to the plant acyltransferase family.

It catalyses the reaction taxa-4(20),11-dien-5alpha-ol + acetyl-CoA = taxa-4(20),11-dien-5alpha-yl acetate + CoA. It participates in alkaloid biosynthesis; taxol biosynthesis; 10-deacetyl-2-debenzoylbaccatin III from taxa-4(20),11-dien-5alpha-ol: step 1/3. This is Taxadien-5-alpha-ol O-acetyltransferase (TAT) from Taxus cuspidata (Japanese yew).